A 98-amino-acid chain; its full sequence is Putative transcriptional regulator YdaS (98 aa).

Functionally, when overexpressed, it induces Rac prophage excision, possibly to counteract the lethal toxicity of YdaT. Overexpression of ydaS or ydaST reduces growth and leads to loss of cell viability. May contribute to toxicity and morphological defects. In Escherichia coli (strain K12), this protein is Putative transcriptional regulator YdaS (ydaS).